Reading from the N-terminus, the 268-residue chain is Tryptophan synthase alpha chain (268 aa).

Catalysis depends on proton acceptor residues E49 and D60.

The protein belongs to the TrpA family. As to quaternary structure, tetramer of two alpha and two beta chains.

It catalyses the reaction (1S,2R)-1-C-(indol-3-yl)glycerol 3-phosphate + L-serine = D-glyceraldehyde 3-phosphate + L-tryptophan + H2O. It participates in amino-acid biosynthesis; L-tryptophan biosynthesis; L-tryptophan from chorismate: step 5/5. The alpha subunit is responsible for the aldol cleavage of indoleglycerol phosphate to indole and glyceraldehyde 3-phosphate. This Shigella flexneri serotype 5b (strain 8401) protein is Tryptophan synthase alpha chain.